A 673-amino-acid chain; its full sequence is UvrABC system protein B (673 aa).

The Helicase ATP-binding domain occupies 26–414; it reads EGLEDGLAHQ…GGDVVDQVVR (389 aa). 39–46 lines the ATP pocket; the sequence is GVTGSGKT. Positions 92-115 match the Beta-hairpin motif; that stretch reads YYDYYQPEAYVPSSDTFIEKDASV. Residues 431–597 form the Helicase C-terminal domain; sequence QVDDLLSEIR…GLNKKVVDIL (167 aa). In terms of domain architecture, UVR spans 633–668; that stretch reads LQKIHELEGLMMQHAQNLEFEEAAQIRDQLHQLREL.

This sequence belongs to the UvrB family. As to quaternary structure, forms a heterotetramer with UvrA during the search for lesions. Interacts with UvrC in an incision complex.

The protein localises to the cytoplasm. The UvrABC repair system catalyzes the recognition and processing of DNA lesions. A damage recognition complex composed of 2 UvrA and 2 UvrB subunits scans DNA for abnormalities. Upon binding of the UvrA(2)B(2) complex to a putative damaged site, the DNA wraps around one UvrB monomer. DNA wrap is dependent on ATP binding by UvrB and probably causes local melting of the DNA helix, facilitating insertion of UvrB beta-hairpin between the DNA strands. Then UvrB probes one DNA strand for the presence of a lesion. If a lesion is found the UvrA subunits dissociate and the UvrB-DNA preincision complex is formed. This complex is subsequently bound by UvrC and the second UvrB is released. If no lesion is found, the DNA wraps around the other UvrB subunit that will check the other stand for damage. This Shigella dysenteriae serotype 1 (strain Sd197) protein is UvrABC system protein B.